We begin with the raw amino-acid sequence, 257 residues long: Beta-fibrinogenase mucrofibrase-4 (257 aa).

The N-terminal stretch at 1–18 is a signal peptide; the sequence is MVLIRVLANLLILQLSYA. A propeptide spanning residues 19 to 24 is cleaved from the precursor; sequence QKSSEL. Positions 25–248 constitute a Peptidase S1 domain; that stretch reads VIGGDECNIN…HLDWIKGFIA (224 aa). 6 disulfides stabilise this stretch: Cys31/Cys162, Cys49/Cys65, Cys97/Cys255, Cys141/Cys209, Cys173/Cys188, and Cys199/Cys224. Catalysis depends on charge relay system residues His64 and Asp109. The Charge relay system role is filled by Ser203.

The protein belongs to the peptidase S1 family. Snake venom subfamily. Monomer. As to expression, expressed by the venom gland.

The protein resides in the secreted. Snake venom serine protease with fibrinogenolytic activities. Cleaves beta-chain of fibrinogen (FGB) efficiently and shows relatively lower activity on alpha-chain. This chain is Beta-fibrinogenase mucrofibrase-4, found in Protobothrops mucrosquamatus (Taiwan habu).